Here is a 367-residue protein sequence, read N- to C-terminus: 4-hydroxyphenylpyruvate dioxygenase (367 aa).

2 consecutive VOC domains span residues 3-135 (GFDH…FVDR) and 166-324 (LIDH…IFTN). Positions 169, 252, and 335 each coordinate Fe cation.

It belongs to the 4HPPD family. Fe cation serves as cofactor.

The enzyme catalyses 3-(4-hydroxyphenyl)pyruvate + O2 = homogentisate + CO2. It participates in amino-acid degradation; L-phenylalanine degradation; acetoacetate and fumarate from L-phenylalanine: step 3/6. Its function is as follows. Key enzyme in the degradation of tyrosine. The protein is 4-hydroxyphenylpyruvate dioxygenase (hpd) of Dictyostelium discoideum (Social amoeba).